Reading from the N-terminus, the 250-residue chain is Indole-3-glycerol phosphate synthase (250 aa).

The protein belongs to the TrpC family.

It catalyses the reaction 1-(2-carboxyphenylamino)-1-deoxy-D-ribulose 5-phosphate + H(+) = (1S,2R)-1-C-(indol-3-yl)glycerol 3-phosphate + CO2 + H2O. It participates in amino-acid biosynthesis; L-tryptophan biosynthesis; L-tryptophan from chorismate: step 4/5. This Metallosphaera sedula (strain ATCC 51363 / DSM 5348 / JCM 9185 / NBRC 15509 / TH2) protein is Indole-3-glycerol phosphate synthase.